A 317-amino-acid chain; its full sequence is Protoheme IX farnesyltransferase (317 aa).

The next 8 membrane-spanning stretches (helical) occupy residues 39 to 59, 60 to 80, 109 to 129, 131 to 151, 160 to 180, 184 to 204, 249 to 269, and 297 to 317; these read VLYL…GGIN, PILG…AGAI, GALA…WLAT, LLAA…YTMW, IVIG…AATG, LLPV…FWAL, VLHL…LAFV, and FKFS…DHLV.

Belongs to the UbiA prenyltransferase family. Protoheme IX farnesyltransferase subfamily.

It localises to the cell inner membrane. It carries out the reaction heme b + (2E,6E)-farnesyl diphosphate + H2O = Fe(II)-heme o + diphosphate. Its pathway is porphyrin-containing compound metabolism; heme O biosynthesis; heme O from protoheme: step 1/1. Its function is as follows. Converts heme B (protoheme IX) to heme O by substitution of the vinyl group on carbon 2 of heme B porphyrin ring with a hydroxyethyl farnesyl side group. The protein is Protoheme IX farnesyltransferase of Acidiphilium cryptum (strain JF-5).